The chain runs to 640 residues: Putative GTPase-activating protein C1620.12c (640 aa).

Residues 96–120 (QPLQGHSPVPSFMSTASTNISSSKI) form a disordered region. Residues 109–120 (STASTNISSSKI) are compositionally biased toward low complexity. Positions 215-408 (CIPSPCRKLV…RLMDLIAIYG (194 aa)) constitute a Rab-GAP TBC domain. Residues 500–636 (RQNNLEELKN…LQTKWKSVSE (137 aa)) adopt a coiled-coil conformation.

Belongs to the GYP5 family.

The protein localises to the nucleus. The protein resides in the cytoplasm. The polypeptide is Putative GTPase-activating protein C1620.12c (Schizosaccharomyces pombe (strain 972 / ATCC 24843) (Fission yeast)).